The following is a 268-amino-acid chain: Interleukin-1 beta (268 aa).

Positions 1 to 116 are excised as a propeptide; the sequence is MAEVPELASE…TRNNDACVHD (116 aa).

This sequence belongs to the IL-1 family. In terms of assembly, monomer. In its precursor form, weakly interacts with full-length MEFV; the mature cytokine does not interact at all. Interacts with integrins ITGAV:ITGBV and ITGA5:ITGB1; integrin-binding is required for IL1B signaling. Interacts with cargo receptor TMED10; the interaction is direct and is required for the secretion of IL1B mature form. Interacts with HSP90AB1; the interaction facilitates cargo translocation into the ERGIC. Interacts with HSP90B1; the interaction facilitates cargo translocation into the ERGIC.

It is found in the cytoplasm. It localises to the cytosol. Its subcellular location is the secreted. The protein resides in the lysosome. The protein localises to the extracellular exosome. Its function is as follows. Potent pro-inflammatory cytokine. Initially discovered as the major endogenous pyrogen, induces prostaglandin synthesis, neutrophil influx and activation, T-cell activation and cytokine production, B-cell activation and antibody production, and fibroblast proliferation and collagen production. Promotes Th17 differentiation of T-cells. Synergizes with IL12/interleukin-12 to induce IFNG synthesis from T-helper 1 (Th1) cells. Plays a role in angiogenesis by inducing VEGF production synergistically with TNF and IL6. Involved in transduction of inflammation downstream of pyroptosis: its mature form is specifically released in the extracellular milieu by passing through the gasdermin-D (GSDMD) pore. The chain is Interleukin-1 beta (IL1B) from Macaca fascicularis (Crab-eating macaque).